Here is a 697-residue protein sequence, read N- to C-terminus: tRNA 5-methylaminomethyl-2-thiouridine biosynthesis bifunctional protein MnmC (697 aa).

A tRNA (mnm(5)s(2)U34)-methyltransferase region spans residues 1-275 (MTAKPHKSCQ…KPATLAAIDH (275 aa)). Residues 280 to 697 (VGGGLASANL…LRKLLKGKAL (418 aa)) are FAD-dependent cmnm(5)s(2)U34 oxidoreductase.

It in the N-terminal section; belongs to the methyltransferase superfamily. tRNA (mnm(5)s(2)U34)-methyltransferase family. In the C-terminal section; belongs to the DAO family. Requires FAD as cofactor.

Its subcellular location is the cytoplasm. The catalysed reaction is 5-aminomethyl-2-thiouridine(34) in tRNA + S-adenosyl-L-methionine = 5-methylaminomethyl-2-thiouridine(34) in tRNA + S-adenosyl-L-homocysteine + H(+). In terms of biological role, catalyzes the last two steps in the biosynthesis of 5-methylaminomethyl-2-thiouridine (mnm(5)s(2)U) at the wobble position (U34) in tRNA. Catalyzes the FAD-dependent demodification of cmnm(5)s(2)U34 to nm(5)s(2)U34, followed by the transfer of a methyl group from S-adenosyl-L-methionine to nm(5)s(2)U34, to form mnm(5)s(2)U34. The chain is tRNA 5-methylaminomethyl-2-thiouridine biosynthesis bifunctional protein MnmC from Shewanella sp. (strain ANA-3).